A 383-amino-acid polypeptide reads, in one-letter code: Probable L-aspartate decarboxylase (383 aa).

N6-(pyridoxal phosphate)lysine is present on lysine 231.

It belongs to the group II decarboxylase family. MfnA subfamily. Pyridoxal 5'-phosphate serves as cofactor.

The enzyme catalyses L-aspartate + H(+) = beta-alanine + CO2. Its pathway is cofactor biosynthesis; coenzyme A biosynthesis. Its function is as follows. Catalyzes the decarboxylation of L-aspartate to produce beta-alanine. The chain is Probable L-aspartate decarboxylase from Thermococcus gammatolerans (strain DSM 15229 / JCM 11827 / EJ3).